Here is a 300-residue protein sequence, read N- to C-terminus: ADP-ribosyl cyclase/cyclic ADP-ribose hydrolase 1 (300 aa).

The Cytoplasmic segment spans residues 1 to 21 (MANCEFSPVSGDKPCCRLSRR). The chain crosses the membrane as a helical; Signal-anchor for type II membrane protein span at residues 22 to 42 (AQLCLGVSILVLILVVVLAVV). Residues 43–300 (VPRWRQQWSG…PEDSSCTSEI (258 aa)) are Extracellular-facing. 3 cysteine pairs are disulfide-bonded: Cys-67/Cys-82, Cys-99/Cys-180, and Cys-160/Cys-173. Asn-100 carries N-linked (GlcNAc...) asparagine glycosylation. Residue Cys-119 is part of the active site. An N-linked (GlcNAc...) asparagine glycan is attached at Asn-164. Cys-201 is an active-site residue. N-linked (GlcNAc...) asparagine glycans are attached at residues Asn-209 and Asn-219. Intrachain disulfides connect Cys-254/Cys-275 and Cys-287/Cys-296.

Belongs to the ADP-ribosyl cyclase family. In terms of assembly, homodimer. As to expression, expressed at high levels in pancreas, liver, kidney, brain, testis, ovary, placenta, malignant lymphoma and neuroblastoma.

The protein resides in the cell surface. It localises to the membrane. It carries out the reaction 2'-phospho-cyclic ADP-ribose + nicotinate = nicotinate-adenine dinucleotide phosphate. The catalysed reaction is NAD(+) = cyclic ADP-beta-D-ribose + nicotinamide + H(+). The enzyme catalyses NAD(+) + H2O = ADP-D-ribose + nicotinamide + H(+). It catalyses the reaction cyclic ADP-beta-D-ribose + H2O = ADP-D-ribose. It carries out the reaction NADP(+) = 2'-phospho-cyclic ADP-ribose + nicotinamide. The catalysed reaction is nicotinate + NADP(+) = nicotinate-adenine dinucleotide phosphate + nicotinamide. Its activity is regulated as follows. ATP inhibits the cADPR hydrolyzing activity. In terms of biological role, synthesizes cyclic ADP-ribose (cADPR), a second messenger for glucose-induced insulin secretion. Synthesizes the Ca(2+) mobilizer nicotinate-adenine dinucleotide phosphate, NAADP(+), from 2'-phospho-cADPR and nicotinic acid, as well as from NADP(+) and nicotinic acid. At both pH 5.0 and pH 7.4 preferentially transforms 2'-phospho-cADPR into NAADP(+), while preferentially cleaving NADP(+) to cADPR and ADPRP rather than into NADDP(+). Has cADPR hydrolase activity. The chain is ADP-ribosyl cyclase/cyclic ADP-ribose hydrolase 1 (CD38) from Homo sapiens (Human).